A 124-amino-acid polypeptide reads, in one-letter code: Small ribosomal subunit protein uS12 (124 aa).

Residues 1–28 form a disordered region; that stretch reads MPTISQLIGSERKRLTRKTKSPALKSCP. At Asp89 the chain carries 3-methylthioaspartic acid. Residues 104-124 are disordered; that stretch reads TAGVKDRRQSRSKYGAKAPKD.

Belongs to the universal ribosomal protein uS12 family. Part of the 30S ribosomal subunit. Contacts proteins S8 and S17. May interact with IF1 in the 30S initiation complex.

In terms of biological role, with S4 and S5 plays an important role in translational accuracy. Its function is as follows. Interacts with and stabilizes bases of the 16S rRNA that are involved in tRNA selection in the A site and with the mRNA backbone. Located at the interface of the 30S and 50S subunits, it traverses the body of the 30S subunit contacting proteins on the other side and probably holding the rRNA structure together. The combined cluster of proteins S8, S12 and S17 appears to hold together the shoulder and platform of the 30S subunit. The chain is Small ribosomal subunit protein uS12 from Prochlorococcus marinus (strain MIT 9312).